A 320-amino-acid polypeptide reads, in one-letter code: UV DNA damage endonuclease (320 aa).

The protein belongs to the uve1/UvsE family.

Component in a DNA repair pathway. Removal of UV LIGHT damaged nucleotides. Recognizes pyrimidine dimers and cleave a phosphodiester bond immediately 5' to the lesion. The polypeptide is UV DNA damage endonuclease (Bacillus pumilus (strain SAFR-032)).